The chain runs to 166 residues: Endoribonuclease YbeY (166 aa).

The Zn(2+) site is built by H132, H136, and H142.

Belongs to the endoribonuclease YbeY family. Requires Zn(2+) as cofactor.

It is found in the cytoplasm. In terms of biological role, single strand-specific metallo-endoribonuclease involved in late-stage 70S ribosome quality control and in maturation of the 3' terminus of the 16S rRNA. The sequence is that of Endoribonuclease YbeY from Clostridium botulinum (strain Eklund 17B / Type B).